A 345-amino-acid polypeptide reads, in one-letter code: Tetraacyldisaccharide 4'-kinase (345 aa).

61-68 provides a ligand contact to ATP; the sequence is TAGGTGKT.

It belongs to the LpxK family.

The enzyme catalyses a lipid A disaccharide + ATP = a lipid IVA + ADP + H(+). Its pathway is glycolipid biosynthesis; lipid IV(A) biosynthesis; lipid IV(A) from (3R)-3-hydroxytetradecanoyl-[acyl-carrier-protein] and UDP-N-acetyl-alpha-D-glucosamine: step 6/6. In terms of biological role, transfers the gamma-phosphate of ATP to the 4'-position of a tetraacyldisaccharide 1-phosphate intermediate (termed DS-1-P) to form tetraacyldisaccharide 1,4'-bis-phosphate (lipid IVA). This is Tetraacyldisaccharide 4'-kinase from Xanthomonas axonopodis pv. citri (strain 306).